Reading from the N-terminus, the 280-residue chain is Ribosomal RNA small subunit methyltransferase A (280 aa).

S-adenosyl-L-methionine is bound by residues H13, L15, G40, E61, D85, and N105.

Belongs to the class I-like SAM-binding methyltransferase superfamily. rRNA adenine N(6)-methyltransferase family. RsmA subfamily.

Its subcellular location is the cytoplasm. It catalyses the reaction adenosine(1518)/adenosine(1519) in 16S rRNA + 4 S-adenosyl-L-methionine = N(6)-dimethyladenosine(1518)/N(6)-dimethyladenosine(1519) in 16S rRNA + 4 S-adenosyl-L-homocysteine + 4 H(+). In terms of biological role, specifically dimethylates two adjacent adenosines (A1518 and A1519) in the loop of a conserved hairpin near the 3'-end of 16S rRNA in the 30S particle. May play a critical role in biogenesis of 30S subunits. This is Ribosomal RNA small subunit methyltransferase A from Phocaeicola vulgatus (strain ATCC 8482 / DSM 1447 / JCM 5826 / CCUG 4940 / NBRC 14291 / NCTC 11154) (Bacteroides vulgatus).